The primary structure comprises 192 residues: Small ribosomal subunit protein eS7 (192 aa).

Belongs to the eukaryotic ribosomal protein eS7 family.

This chain is Small ribosomal subunit protein eS7 (RpS7), found in Culex quinquefasciatus (Southern house mosquito).